Reading from the N-terminus, the 332-residue chain is Ketol-acid reductoisomerase (NAD(+)) (332 aa).

Residues 1 to 186 (MEILHDEDVD…HWTKAGILEC (186 aa)) form the KARI N-terminal Rossmann domain. NAD(+) contacts are provided by residues 24 to 27 (YGAQ), E46, N55, S57, and 87 to 90 (DEVQ). The active site involves H112. G138 is an NAD(+) binding site. Residues 187–332 (TFEQETYEDL…AEIRKLFAQK (146 aa)) form the KARI C-terminal knotted domain. The Mg(2+) site is built by D195, E199, E231, and E235. Substrate is bound at residue S256.

This sequence belongs to the ketol-acid reductoisomerase family. As to quaternary structure, homodimer. Mg(2+) is required as a cofactor.

The catalysed reaction is (2R)-2,3-dihydroxy-3-methylbutanoate + NAD(+) = (2S)-2-acetolactate + NADH + H(+). Its pathway is amino-acid biosynthesis; L-isoleucine biosynthesis; L-isoleucine from 2-oxobutanoate: step 2/4. It participates in amino-acid biosynthesis; L-valine biosynthesis; L-valine from pyruvate: step 2/4. Its function is as follows. Involved in the biosynthesis of branched-chain amino acids (BCAA). Catalyzes an alkyl-migration followed by a ketol-acid reduction of (S)-2-acetolactate (S2AL) to yield (R)-2,3-dihydroxy-isovalerate. In the isomerase reaction, S2AL is rearranged via a Mg-dependent methyl migration to produce 3-hydroxy-3-methyl-2-ketobutyrate (HMKB). In the reductase reaction, this 2-ketoacid undergoes a metal-dependent reduction by NADH to yield (R)-2,3-dihydroxy-isovalerate. This chain is Ketol-acid reductoisomerase (NAD(+)), found in Uncultured archaeon GZfos26G2.